We begin with the raw amino-acid sequence, 523 residues long: 2-isopropylmalate synthase (523 aa).

In terms of domain architecture, Pyruvate carboxyltransferase spans 12–274 (VVIFDTTLRD…WNKIDTTQLT (263 aa)). Mn(2+)-binding residues include D21, H209, H211, and N245. The interval 398-523 (KLLSLSVIAG…AQGAAAAAAS (126 aa)) is regulatory domain.

Belongs to the alpha-IPM synthase/homocitrate synthase family. LeuA type 1 subfamily. Homodimer. Requires Mn(2+) as cofactor.

It localises to the cytoplasm. The catalysed reaction is 3-methyl-2-oxobutanoate + acetyl-CoA + H2O = (2S)-2-isopropylmalate + CoA + H(+). It participates in amino-acid biosynthesis; L-leucine biosynthesis; L-leucine from 3-methyl-2-oxobutanoate: step 1/4. Catalyzes the condensation of the acetyl group of acetyl-CoA with 3-methyl-2-oxobutanoate (2-ketoisovalerate) to form 3-carboxy-3-hydroxy-4-methylpentanoate (2-isopropylmalate). The chain is 2-isopropylmalate synthase from Bradyrhizobium sp. (strain BTAi1 / ATCC BAA-1182).